A 127-amino-acid chain; its full sequence is Major sperm protein 63 (127 aa).

Alanine 2 is subject to N-acetylalanine. In terms of domain architecture, MSP spans 9 to 126 (DIQTQPGTKI…RRKNLPIEYN (118 aa)).

In terms of tissue distribution, sperm.

Its subcellular location is the cell projection. The protein resides in the pseudopodium. It is found in the cytoplasm. The protein localises to the cytoskeleton. Its function is as follows. Central component in molecular interactions underlying sperm crawling. Forms an extensive filament system that extends from sperm villipoda, along the leading edge of the pseudopod. This chain is Major sperm protein 63 (msp-63), found in Caenorhabditis elegans.